A 994-amino-acid polypeptide reads, in one-letter code: MERGGFGGAGRHDEEAPAMRPAPQQRYRTVESHDRAVVQMAPMEFGSSADASASAGPRYIKPGTNLRTDARMHMASSNGRSSNGSQGDSKLELFGFDSLVNILGLKRMVGEQAQASASTRDGENAGIAIGHPKETETKLDTMMGVFVPCLQNILGIIYYIRFTWIVGMGGVWQSLVLVAFCGSCTFLTTISLSAIATNGAMKGGGPYYLIGRALGPEVGVSIGLCFFLGNAVAGAMYVLGAVETFLDAVPSAEFFQESVTVVTNTFVNGTAAGNATTISTPNLHDLQVYGIIVTILLCFIVFGGVKIINKVAPAFLIPVLFSILCIYIGVFIAPRPNASKWITGLSITTLKDNWSSDYQRTNNAGVPDPNGSIYWDFNALLGLYFPAVTGIMAGSNRSASLKDTQRSIPIGTLHATISTTMMYLLSVFLFGALSTREGLLTDRLLCAAVAWPSPAVVYAGIILSTLGAALQSLTGAPRLLAAIANDDILPVLNYFKAYEGSEPHVATLFTSFICISCVIIGNLDVITPTITMFFLLCYAGVNLSCFLLDLLDAPSWRPRWKLHHWSLSLIGALLCIVIMFMISWTFTVVSLALASLIYYYVSLKGKAGDWGDGFKSAYFQLALRSLRSMGANQVHPKNWYPIPLIFCRPWGKLPEDVPCHPKLADFANCMKKKGRGMSIFVSIIDGDYHESAEDAKTACRQLSAYIDYRRCEGVAEIIVAPSTSIGFRSIVQTMGLGNLKPNIVVMRYPEIWRRENLTQIPSTFVSIINDCITANKAVVIVKGLDEWPNEYQRQYGTIDLYWIVRDGGLMLLLSQLLLTKESFESCKIQVFCIAEEDTEAEELKADVKKFLYDLRMQADVIVVTVKSWEADPDRSGGSKKDDPEVYRSAQSRIRTYISQLKEAAERERRPLMEGGKQVVVDEQKVEKFLYTMLKLNATILRHSRMAVVVLVSLPPPPLNHLAYCYMEYMDLLVENIPRILIVRGYRRDVVTLFT.

Residues 1 to 28 (MERGGFGGAGRHDEEAPAMRPAPQQRYR) are disordered. Residues 1–139 (MERGGFGGAG…GHPKETETKL (139 aa)) are Cytoplasmic-facing. Residues 140 to 160 (DTMMGVFVPCLQNILGIIYYI) form a helical membrane-spanning segment. Residues 161–174 (RFTWIVGMGGVWQS) lie on the Extracellular side of the membrane. The chain crosses the membrane as a helical span at residues 175-195 (LVLVAFCGSCTFLTTISLSAI). Over 196-221 (ATNGAMKGGGPYYLIGRALGPEVGVS) the chain is Cytoplasmic. Residues 222–242 (IGLCFFLGNAVAGAMYVLGAV) traverse the membrane as a helical segment. At 243 to 287 (ETFLDAVPSAEFFQESVTVVTNTFVNGTAAGNATTISTPNLHDLQ) the chain is on the extracellular side. N-linked (GlcNAc...) asparagine glycosylation is found at Asn-268 and Asn-274. A helical transmembrane segment spans residues 288–308 (VYGIIVTILLCFIVFGGVKII). The Cytoplasmic segment spans residues 309–311 (NKV). The helical transmembrane segment at 312–332 (APAFLIPVLFSILCIYIGVFI) threads the bilayer. Residues 333-372 (APRPNASKWITGLSITTLKDNWSSDYQRTNNAGVPDPNGS) are Extracellular-facing. N-linked (GlcNAc...) asparagine glycans are attached at residues Asn-337, Asn-353, and Asn-370. Residues 373–393 (IYWDFNALLGLYFPAVTGIMA) traverse the membrane as a helical segment. Residues 394–412 (GSNRSASLKDTQRSIPIGT) lie on the Cytoplasmic side of the membrane. Residues 413–433 (LHATISTTMMYLLSVFLFGAL) traverse the membrane as a helical segment. Over 434–448 (STREGLLTDRLLCAA) the chain is Extracellular. A helical membrane pass occupies residues 449 to 469 (VAWPSPAVVYAGIILSTLGAA). Over 470 to 505 (LQSLTGAPRLLAAIANDDILPVLNYFKAYEGSEPHV) the chain is Cytoplasmic. The chain crosses the membrane as a helical span at residues 506–526 (ATLFTSFICISCVIIGNLDVI). Residues 527 to 529 (TPT) lie on the Extracellular side of the membrane. Residues 530–552 (ITMFFLLCYAGVNLSCFLLDLLD) traverse the membrane as a helical segment. Residues 553–558 (APSWRP) lie on the Cytoplasmic side of the membrane. Residues 559 to 579 (RWKLHHWSLSLIGALLCIVIM) form a helical membrane-spanning segment. Residues 580-585 (FMISWT) lie on the Extracellular side of the membrane. A helical membrane pass occupies residues 586–606 (FTVVSLALASLIYYYVSLKGK). Residues 607–994 (AGDWGDGFKS…YRRDVVTLFT (388 aa)) lie on the Cytoplasmic side of the membrane.

Belongs to the SLC12A transporter family.

It localises to the membrane. In terms of biological role, probable cation/chloride cotransporter. The protein is Cation-chloride cotransporter 2 (CCC2) of Oryza sativa subsp. japonica (Rice).